We begin with the raw amino-acid sequence, 377 residues long: Chaperone protein DnaJ (377 aa).

Positions 5-70 (DFYEVLGVER…SKRAAYDQYG (66 aa)) constitute a J domain. The CR-type zinc-finger motif lies at 136–214 (GTTVTIRVPT…CHGQGRVEEQ (79 aa)). Zn(2+) is bound by residues cysteine 149, cysteine 152, cysteine 166, cysteine 169, cysteine 188, cysteine 191, cysteine 202, and cysteine 205. 4 CXXCXGXG motif repeats span residues 149 to 156 (CKTCNGSG), 166 to 173 (CTTCGGIG), 188 to 195 (CPRCHGTG), and 202 to 209 (CGSCHGQG).

It belongs to the DnaJ family. Homodimer. Requires Zn(2+) as cofactor.

The protein localises to the cytoplasm. In terms of biological role, participates actively in the response to hyperosmotic and heat shock by preventing the aggregation of stress-denatured proteins and by disaggregating proteins, also in an autonomous, DnaK-independent fashion. Unfolded proteins bind initially to DnaJ; upon interaction with the DnaJ-bound protein, DnaK hydrolyzes its bound ATP, resulting in the formation of a stable complex. GrpE releases ADP from DnaK; ATP binding to DnaK triggers the release of the substrate protein, thus completing the reaction cycle. Several rounds of ATP-dependent interactions between DnaJ, DnaK and GrpE are required for fully efficient folding. Also involved, together with DnaK and GrpE, in the DNA replication of plasmids through activation of initiation proteins. The sequence is that of Chaperone protein DnaJ from Pseudomonas aeruginosa (strain LESB58).